A 1580-amino-acid chain; its full sequence is Transcriptional activator GLI3 (1580 aa).

N-acetylmethionine is present on M1. Composition is skewed to polar residues over residues M1 to T10 and I58 to S78. The interval M1–S79 is disordered. R175 is modified (omega-N-methylarginine). A disordered region spans residues Q368–E475. Residues N401–G427 show a composition bias toward polar residues. Glycyl lysine isopeptide (Lys-Gly) (interchain with G-Cter in SUMO2) cross-links involve residues K438 and K462. Residues V461–P474 are compositionally biased toward basic and acidic residues. C2H2-type zinc fingers lie at residues T480 to H505, F513 to H540, H546 to H570, Y576 to H601, and Y607 to H632. The disordered stretch occupies residues D620–L728. The segment covering H632–P648 has biased composition (basic and acidic residues). S664 bears the Phosphoserine mark. Basic and acidic residues predominate over residues S684–K699. Residues S703–S726 show a composition bias toward low complexity. Residues D745–N845 form a mediates interaction with DZIP1 region. Residue K773 forms a Glycyl lysine isopeptide (Lys-Gly) (interchain with G-Cter in ubiquitin) linkage. K779 participates in a covalent cross-link: Glycyl lysine isopeptide (Lys-Gly) (interchain with G-Cter in SUMO2); alternate. Residue K779 forms a Glycyl lysine isopeptide (Lys-Gly) (interchain with G-Cter in ubiquitin); alternate linkage. Glycyl lysine isopeptide (Lys-Gly) (interchain with G-Cter in ubiquitin) cross-links involve residues K784 and K800. S849, S865, S877, and S907 each carry phosphoserine; by PKA. Low complexity predominate over residues R863–A882. Positions R863–L918 are disordered. The segment covering E908–L918 has biased composition (polar residues). Phosphoserine; by PKA occurs at positions 980 and 1006. The disordered stretch occupies residues D981 to R1042.

The protein belongs to the GLI C2H2-type zinc-finger protein family. As to quaternary structure, the full-length GLI3 form (GLI3FL) interacts with SUFU and this interaction regulates the formation of either repressor or activator forms of GLI3. Its association with SUFU is regulated by Hh signaling and dissociation of the SUFU-GLI3 interaction requires the presence of the ciliary motor KIF3A. Interacts with KIF7. The activator form of GLI3 (GLI3A) but not the repressor form (GLI3R) can interact with TRPS1. The phosphorylated form interacts with BTRC. Interacts with ZIC1. Interacts with ZIC3 (via C2H2-type domains 3, 4 and 5); the interaction enhances its transcriptional activity. Interacts with WRD11; the interaction associates EMX1 with GLI3. Interacts with DZIP1; retains GLI3 within the cytoplasm. Phosphorylated on multiple sites by protein kinase A (PKA) and phosphorylation by PKA primes further phosphorylation by CK1 and GSK3. Phosphorylated by DYRK2 (in vitro). Phosphorylation is essential for its proteolytic processing. In terms of processing, transcriptional repressor GLI3R, a C-terminally truncated form, is generated from the full-length GLI3 protein (GLI3FL/GLI3-190) through proteolytic processing. This process requires PKA-primed phosphorylation of GLI3, ubiquitination of GLI3 and the presence of BTRC. GLI3FL is complexed with SUFU in the cytoplasm and is maintained in a neutral state. Without the Hh signal, the SUFU-GLI3 complex is recruited to cilia, leading to the efficient processing of GLI3FL into GLI3R. GLI3R formation leads to its dissociation from SUFU, allowing it to translocate into the nucleus, and repress Hh target genes. When Hh signaling is initiated, SUFU dissociates from GLI3FL and this has two consequences. First, GLI3R production is halted. Second, free GLI3FL translocates to the nucleus, where it is phosphorylated, destabilized, and converted to a transcriptional activator (GLI3A). Phosphorylated in vitro by ULK3. Is expressed in a wide variety of normal adult tissues, including lung, colon, spleen, placenta, testis, and myometrium.

It is found in the nucleus. It localises to the cytoplasm. Its subcellular location is the cell projection. The protein resides in the cilium. In terms of biological role, has a dual function as a transcriptional activator and a repressor of the sonic hedgehog (Shh) pathway, and plays a role in limb development. The full-length GLI3 form (GLI3FL) after phosphorylation and nuclear translocation, acts as an activator (GLI3A) while GLI3R, its C-terminally truncated form, acts as a repressor. A proper balance between the GLI3 activator and the repressor GLI3R, rather than the repressor gradient itself or the activator/repressor ratio gradient, specifies limb digit number and identity. In concert with TRPS1, plays a role in regulating the size of the zone of distal chondrocytes, in restricting the zone of PTHLH expression in distal cells and in activating chondrocyte proliferation. Binds to the minimal GLI-consensus sequence 5'-GGGTGGTC-3'. This chain is Transcriptional activator GLI3 (GLI3), found in Homo sapiens (Human).